A 199-amino-acid chain; its full sequence is Holliday junction branch migration complex subunit RuvA (199 aa).

Positions 1-64 (MIGRITGILL…EDGHFLYGFA (64 aa)) are domain I. Positions 65 to 143 (SADERAAFRQ…RALPGFGAST (79 aa)) are domain II. The tract at residues 144 to 152 (VPGAAAQPA) is flexible linker. Residues 152-199 (ADSRSDILNALLALGYSDKEAQSALKAIPPETGVSDGIRQALKLLSKA) are domain III.

This sequence belongs to the RuvA family. As to quaternary structure, homotetramer. Forms an RuvA(8)-RuvB(12)-Holliday junction (HJ) complex. HJ DNA is sandwiched between 2 RuvA tetramers; dsDNA enters through RuvA and exits via RuvB. An RuvB hexamer assembles on each DNA strand where it exits the tetramer. Each RuvB hexamer is contacted by two RuvA subunits (via domain III) on 2 adjacent RuvB subunits; this complex drives branch migration. In the full resolvosome a probable DNA-RuvA(4)-RuvB(12)-RuvC(2) complex forms which resolves the HJ.

The protein resides in the cytoplasm. In terms of biological role, the RuvA-RuvB-RuvC complex processes Holliday junction (HJ) DNA during genetic recombination and DNA repair, while the RuvA-RuvB complex plays an important role in the rescue of blocked DNA replication forks via replication fork reversal (RFR). RuvA specifically binds to HJ cruciform DNA, conferring on it an open structure. The RuvB hexamer acts as an ATP-dependent pump, pulling dsDNA into and through the RuvAB complex. HJ branch migration allows RuvC to scan DNA until it finds its consensus sequence, where it cleaves and resolves the cruciform DNA. The sequence is that of Holliday junction branch migration complex subunit RuvA from Aromatoleum aromaticum (strain DSM 19018 / LMG 30748 / EbN1) (Azoarcus sp. (strain EbN1)).